We begin with the raw amino-acid sequence, 52 residues long: UPF0391 membrane protein ABAYE0050 (52 aa).

2 helical membrane passes run 6-26 (IIFA…VAGL) and 30-50 (FAVI…ISRG).

Belongs to the UPF0391 family.

Its subcellular location is the cell membrane. This is UPF0391 membrane protein ABAYE0050 from Acinetobacter baumannii (strain AYE).